We begin with the raw amino-acid sequence, 161 residues long: Phage-like element PBSX protein XkdI (161 aa).

It to B.subtilis YqbI.

This Bacillus subtilis (strain 168) protein is Phage-like element PBSX protein XkdI (xkdI).